The primary structure comprises 276 residues: 4-deoxy-L-threo-5-hexosulose-uronate ketol-isomerase (276 aa).

Residues His-194, His-196, Glu-201, and His-243 each contribute to the Zn(2+) site.

The protein belongs to the KduI family. Zn(2+) serves as cofactor.

It catalyses the reaction 5-dehydro-4-deoxy-D-glucuronate = 3-deoxy-D-glycero-2,5-hexodiulosonate. The protein operates within glycan metabolism; pectin degradation; 2-dehydro-3-deoxy-D-gluconate from pectin: step 4/5. Its function is as follows. Catalyzes the isomerization of 5-dehydro-4-deoxy-D-glucuronate to 3-deoxy-D-glycero-2,5-hexodiulosonate. This is 4-deoxy-L-threo-5-hexosulose-uronate ketol-isomerase from Halalkalibacterium halodurans (strain ATCC BAA-125 / DSM 18197 / FERM 7344 / JCM 9153 / C-125) (Bacillus halodurans).